We begin with the raw amino-acid sequence, 507 residues long: Arabinose import ATP-binding protein AraG (507 aa).

2 consecutive ABC transporter domains span residues 14-249 (LRFN…MVGR) and 249-505 (RDIQ…LPRT). 46 to 53 (GENGAGKS) contacts ATP.

The protein belongs to the ABC transporter superfamily. Arabinose importer (TC 3.A.1.2.2) family. As to quaternary structure, the complex is composed of two ATP-binding proteins (AraG), two transmembrane proteins (AraH) and a solute-binding protein (AraF).

It is found in the cell inner membrane. The enzyme catalyses L-arabinose(out) + ATP + H2O = L-arabinose(in) + ADP + phosphate + H(+). Its function is as follows. Part of the ABC transporter complex AraFGH involved in arabinose import. Responsible for energy coupling to the transport system. The protein is Arabinose import ATP-binding protein AraG of Pseudomonas syringae pv. syringae (strain B728a).